Here is a 283-residue protein sequence, read N- to C-terminus: Stage II sporulation protein Q (283 aa).

Residues 22-42 (WVFPAIYLVSAAVILTAVLWY) traverse the membrane as a helical segment. The tract at residues 228–283 (EKAATQETEESIQQSSEKKDGSTEKGTEEKSGEKKDDSTDKSGSKESSTTEDTEQS) is disordered. The span at 243–271 (SEKKDGSTEKGTEEKSGEKKDDSTDKSGS) shows a compositional bias: basic and acidic residues.

Interacts with SpoIIIAH and SpoIIE.

It localises to the forespore membrane. Its function is as follows. Involved in forespore engulfment and required for anchoring membrane proteins on the forespore side of the septal membrane. Forms a channel with SpoIIIAH that is open on the forespore end and closed (or gated) on the mother cell end. This allows sigma-E-directed gene expression in the mother-cell compartment of the sporangium to trigger the activation of sigma-G forespore-specific gene expression by a pathway of intercellular signaling. The protein is Stage II sporulation protein Q (spoIIQ) of Bacillus subtilis (strain 168).